The following is a 311-amino-acid chain: Acetyl-coenzyme A carboxylase carboxyl transferase subunit beta (311 aa).

One can recognise a CoA carboxyltransferase N-terminal domain in the interval 27 to 296; the sequence is LWTKCGHCSA…AEAADAPEAG (270 aa). Residues cysteine 31, cysteine 34, cysteine 50, and cysteine 53 each contribute to the Zn(2+) site. The segment at 31-53 adopts a C4-type zinc-finger fold; sequence CGHCSAVLYRPELERNQEVCPKC. A compositionally biased stretch (low complexity) spans 286–299; it reads AAEAADAPEAGEQP. The tract at residues 286-311 is disordered; the sequence is AAEAADAPEAGEQPSEATDPVGEHWD.

Belongs to the AccD/PCCB family. Acetyl-CoA carboxylase is a heterohexamer composed of biotin carboxyl carrier protein (AccB), biotin carboxylase (AccC) and two subunits each of ACCase subunit alpha (AccA) and ACCase subunit beta (AccD). Zn(2+) serves as cofactor.

Its subcellular location is the cytoplasm. The enzyme catalyses N(6)-carboxybiotinyl-L-lysyl-[protein] + acetyl-CoA = N(6)-biotinyl-L-lysyl-[protein] + malonyl-CoA. It functions in the pathway lipid metabolism; malonyl-CoA biosynthesis; malonyl-CoA from acetyl-CoA: step 1/1. In terms of biological role, component of the acetyl coenzyme A carboxylase (ACC) complex. Biotin carboxylase (BC) catalyzes the carboxylation of biotin on its carrier protein (BCCP) and then the CO(2) group is transferred by the transcarboxylase to acetyl-CoA to form malonyl-CoA. This chain is Acetyl-coenzyme A carboxylase carboxyl transferase subunit beta, found in Alkalilimnicola ehrlichii (strain ATCC BAA-1101 / DSM 17681 / MLHE-1).